We begin with the raw amino-acid sequence, 224 residues long: Pre-hexon-linking protein VIII (224 aa).

At threonine 64 the chain carries Phosphothreonine; by host. Positions 112-154 (RQPSPSHIDIKDTMLAGTGIQLGEDIPSVSWIRPDGIFQLGGG) are excised as a propeptide.

The protein belongs to the adenoviridae hexon-linking protein family. As to quaternary structure, interacts with the peripentonal hexons as well as the hexons in the facets. Part of a complex composed of the core-capsid bridging protein, the endosome lysis protein VI and the hexon-linking protein VIII; these interactions bridge the virus core to the capsid. Cleaved by the viral protease during virion maturation. May cause the middle segment to be shed from the capsid.

The protein resides in the virion. It is found in the host nucleus. Structural component of the virion that acts as a cement protein on the capsid interior and which glue the peripentonal hexons and group-of-nine hexons together. This chain is Pre-hexon-linking protein VIII, found in Canine adenovirus serotype 1 (strain CLL) (CAdV-1).